We begin with the raw amino-acid sequence, 479 residues long: Spindly-like protein spdl-1 (479 aa).

3 coiled-coil regions span residues 4–180 (DEEK…EGEL), 210–250 (EEDL…RFNV), and 321–357 (LMKD…KCAH).

Interacts with Zwilch homolog zwl-1, a component of the RZZ complex. Interacts with mdf-1 and mdf-2.

Its subcellular location is the chromosome. The protein resides in the centromere. The protein localises to the kinetochore. It localises to the cytoplasm. It is found in the cytoskeleton. Its subcellular location is the spindle pole. In terms of biological role, transient kinetochore component required for chromosome and spindle pole alignment and chromosome segregation during mitosis. Functions downstream of the RZZ complex to mediate kinetochore-microtubule attachments and nuclear envelope breakdown during cell division. Required for kinetochore assembly and localizes the checkpoint proteins mdf-1 and mdf-2, dynein and dynactin to unattached kinetochores. Dynein is believed to control the initial lateral interaction between the kinetochore and spindle microtubules and to facilitate the subsequent formation of end-on kinetochore-microtubule attachments mediated by the NDC80 complex. Required for embryonic development. This chain is Spindly-like protein spdl-1, found in Caenorhabditis elegans.